The following is a 457-amino-acid chain: uncharacterized protein (457 aa).

The signal sequence occupies residues 1–18 (MKLLISLLWSIFFSIVYS). The Lumenal segment spans residues 19–173 (EKTLLNFKHY…GGLPASQFPR (155 aa)). Residues 174–194 (MPISGGITIAYSVILALWMFF) traverse the membrane as a helical segment. Over 195–207 (RFQYKHSIVTVQK) the chain is Cytoplasmic. The helical transmembrane segment at 208 to 228 (AIMFLLIFSCAQQAVTSIVLD) threads the bilayer. Residues 229–243 (TENLRNRGNFTWLGE) lie on the Lumenal side of the membrane. The helical transmembrane segment at 244 to 264 (TLVSILFACQLVLDLALLLIL) threads the bilayer. At 265 to 284 (SWGYTRYSTNMRDRLFTEAK) the chain is on the cytoplasmic side. A helical membrane pass occupies residues 285–305 (IPLIICFFALFVVRFFAITIQ). The Lumenal portion of the chain corresponds to 306–314 (SIHLGLWFC). Residues 315–335 (FFFLTACISALYILFGAFVAL) traverse the membrane as a helical segment. At 336–358 (PSTLRALVEQRYYTLHSIYKIFR) the chain is on the cytoplasmic side. A helical transmembrane segment spans residues 359–379 (IMVLCGVVTIFSFSLVALIFC). The Lumenal portion of the chain corresponds to 380-457 (SNTNNNSTNK…EEDIRADKSK (78 aa)).

This sequence belongs to the LU7TM family.

It localises to the endoplasmic reticulum membrane. This is an uncharacterized protein from Schizosaccharomyces pombe (strain 972 / ATCC 24843) (Fission yeast).